The chain runs to 317 residues: Aspartate carbamoyltransferase catalytic subunit (317 aa).

Carbamoyl phosphate is bound by residues R66 and T67. K94 contributes to the L-aspartate binding site. Residues R116, H144, and Q147 each coordinate carbamoyl phosphate. L-aspartate is bound by residues R177 and R231. Carbamoyl phosphate-binding residues include G272 and P273.

Belongs to the aspartate/ornithine carbamoyltransferase superfamily. ATCase family. As to quaternary structure, heterododecamer (2C3:3R2) of six catalytic PyrB chains organized as two trimers (C3), and six regulatory PyrI chains organized as three dimers (R2).

It carries out the reaction carbamoyl phosphate + L-aspartate = N-carbamoyl-L-aspartate + phosphate + H(+). It participates in pyrimidine metabolism; UMP biosynthesis via de novo pathway; (S)-dihydroorotate from bicarbonate: step 2/3. Functionally, catalyzes the condensation of carbamoyl phosphate and aspartate to form carbamoyl aspartate and inorganic phosphate, the committed step in the de novo pyrimidine nucleotide biosynthesis pathway. The sequence is that of Aspartate carbamoyltransferase catalytic subunit from Nitrobacter winogradskyi (strain ATCC 25391 / DSM 10237 / CIP 104748 / NCIMB 11846 / Nb-255).